Consider the following 354-residue polypeptide: S-adenosylmethionine:tRNA ribosyltransferase-isomerase (354 aa).

Belongs to the QueA family. Monomer.

Its subcellular location is the cytoplasm. It catalyses the reaction 7-aminomethyl-7-carbaguanosine(34) in tRNA + S-adenosyl-L-methionine = epoxyqueuosine(34) in tRNA + adenine + L-methionine + 2 H(+). It participates in tRNA modification; tRNA-queuosine biosynthesis. Functionally, transfers and isomerizes the ribose moiety from AdoMet to the 7-aminomethyl group of 7-deazaguanine (preQ1-tRNA) to give epoxyqueuosine (oQ-tRNA). In Klebsiella pneumoniae (strain 342), this protein is S-adenosylmethionine:tRNA ribosyltransferase-isomerase.